A 98-amino-acid polypeptide reads, in one-letter code: NADH-ubiquinone oxidoreductase chain 4L (98 aa).

The next 3 membrane-spanning stretches (helical) occupy residues 2-22 (PSISINITLAFTMALTGMLVF), 29-49 (SLLCLEGMMLSMFILSILFIM), and 61-81 (ILLLVLAACEAAIGLALLVMV).

Belongs to the complex I subunit 4L family. In terms of assembly, core subunit of respiratory chain NADH dehydrogenase (Complex I) which is composed of 45 different subunits.

Its subcellular location is the mitochondrion inner membrane. The enzyme catalyses a ubiquinone + NADH + 5 H(+)(in) = a ubiquinol + NAD(+) + 4 H(+)(out). In terms of biological role, core subunit of the mitochondrial membrane respiratory chain NADH dehydrogenase (Complex I) which catalyzes electron transfer from NADH through the respiratory chain, using ubiquinone as an electron acceptor. Part of the enzyme membrane arm which is embedded in the lipid bilayer and involved in proton translocation. In Lepilemur mitsinjoensis (Mitsinjo sportive lemur), this protein is NADH-ubiquinone oxidoreductase chain 4L (MT-ND4L).